Here is an 856-residue protein sequence, read N- to C-terminus: Inactive rhomboid protein 1 (856 aa).

Positions Met1–Lys21 are disordered. At Met1 to Thr412 the chain is on the cytoplasmic side. Residues Ser76 and Ser176 each carry the phosphoserine modification. Thr180 and Thr183 each carry phosphothreonine. Position 391 is a phosphoserine (Ser391). Residues Phe413 to Phe433 form a helical membrane-spanning segment. At Ser434–Arg656 the chain is on the lumenal side. Residue Asn584 is glycosylated (N-linked (GlcNAc...) asparagine). The helical transmembrane segment at Leu657–Gln677 threads the bilayer. Residues Met678–Arg692 lie on the Cytoplasmic side of the membrane. Residues Ile693–Pro713 form a helical membrane-spanning segment. Over Tyr714–Arg715 the chain is Lumenal. The chain crosses the membrane as a helical span at residues Ala716–Phe736. The Cytoplasmic segment spans residues Gln737–Arg747. Residues Ala748 to Ile768 form a helical membrane-spanning segment. The Lumenal portion of the chain corresponds to Asp769–His773. Residues Ile774–Gly794 traverse the membrane as a helical segment. Topologically, residues Lys795 to Gln804 are cytoplasmic. A helical membrane pass occupies residues Ile805–Phe825. Topologically, residues Tyr826–His856 are lumenal.

This sequence belongs to the peptidase S54 family. As to quaternary structure, homodimer, or homooligomer. Interacts with TGFA and HBEGF. Interacts with EGF; may retain EGF in the endoplasmic reticulum and regulates its degradation through the endoplasmic reticulum-associated degradation (ERAD). Interacts (via cytoplasmic N-terminus) with FRMD8/iTAP; this interaction leads to mutual protein stabilization. Interacts with ADAM17/TACE.

It is found in the endoplasmic reticulum membrane. It localises to the golgi apparatus membrane. Functionally, regulates ADAM17 protease, a sheddase of the epidermal growth factor (EGF) receptor ligands and TNF, thereby plays a role in sleep, cell survival, proliferation, migration and inflammation. Does not exhibit any protease activity on its own. The polypeptide is Inactive rhomboid protein 1 (RHBDF1) (Bos taurus (Bovine)).